Reading from the N-terminus, the 720-residue chain is DNA ligase (720 aa).

Residues 60–64, 109–110, and glutamate 140 each bind NAD(+); these read DYDYD and SL. Lysine 142 serves as the catalytic N6-AMP-lysine intermediate. Positions 163 and 201 each coordinate NAD(+). Residues 220–239 form a disordered region; that stretch reads GLPPFANPRNAAAGSIRQKD. NAD(+)-binding residues include lysine 320 and lysine 344. Cysteine 438, cysteine 441, cysteine 456, and cysteine 461 together coordinate Zn(2+). The BRCT domain occupies 619–709; sequence KVADVLKGKT…VDLEKIKKED (91 aa).

It belongs to the NAD-dependent DNA ligase family. LigA subfamily. The cofactor is Mn(2+). It depends on Mg(2+) as a cofactor.

It catalyses the reaction NAD(+) + (deoxyribonucleotide)n-3'-hydroxyl + 5'-phospho-(deoxyribonucleotide)m = (deoxyribonucleotide)n+m + AMP + beta-nicotinamide D-nucleotide.. Its function is as follows. DNA ligase that catalyzes the formation of phosphodiester linkages between 5'-phosphoryl and 3'-hydroxyl groups in double-stranded DNA using NAD as a coenzyme and as the energy source for the reaction. It is essential for DNA replication and repair of damaged DNA. The polypeptide is DNA ligase (Aquifex aeolicus (strain VF5)).